The following is a 131-amino-acid chain: Guanyl-specific ribonuclease F1 (131 aa).

The first 25 residues, Met1–Arg25, serve as a signal peptide directing secretion. Position 26 is a pyrrolidone carboxylic acid (Gln26). 2 cysteine pairs are disulfide-bonded: Cys31-Cys127 and Cys49-Cys108. His65 is an active-site residue. Glu83 acts as the Proton acceptor in catalysis. His116 acts as the Proton donor in catalysis.

It belongs to the ribonuclease N1/T1 family.

It carries out the reaction [RNA] containing guanosine + H2O = an [RNA fragment]-3'-guanosine-3'-phosphate + a 5'-hydroxy-ribonucleotide-3'-[RNA fragment].. The sequence is that of Guanyl-specific ribonuclease F1 from Fusarium fujikuroi (Bakanae and foot rot disease fungus).